A 108-amino-acid polypeptide reads, in one-letter code: uncharacterized protein (108 aa).

A compositionally biased stretch (polar residues) spans 1-15 (MSDSNSRLVYSTQTG). Residues 1–29 (MSDSNSRLVYSTQTGRIEEPKTAPVRPKG) are disordered. A compositionally biased stretch (basic and acidic residues) spans 16 to 29 (RIEEPKTAPVRPKG).

This sequence belongs to the SUI1 family.

This is an uncharacterized protein from Salmonella typhi.